The following is a 306-amino-acid chain: NAD kinase 1 (306 aa).

The Proton acceptor role is filled by Asp-67. NAD(+) is bound by residues 67–68, 149–150, and Asp-181; these read DG and NE.

This sequence belongs to the NAD kinase family. A divalent metal cation serves as cofactor.

The protein resides in the cytoplasm. It carries out the reaction NAD(+) + ATP = ADP + NADP(+) + H(+). In terms of biological role, involved in the regulation of the intracellular balance of NAD and NADP, and is a key enzyme in the biosynthesis of NADP. Catalyzes specifically the phosphorylation on 2'-hydroxyl of the adenosine moiety of NAD to yield NADP. The chain is NAD kinase 1 from Thermosynechococcus vestitus (strain NIES-2133 / IAM M-273 / BP-1).